A 294-amino-acid chain; its full sequence is 4-hydroxy-tetrahydrodipicolinate synthase (294 aa).

Pyruvate is bound at residue Thr-45. The active-site Proton donor/acceptor is the Tyr-133. Lys-161 serves as the catalytic Schiff-base intermediate with substrate. A pyruvate-binding site is contributed by Ile-203.

It belongs to the DapA family. Homotetramer; dimer of dimers.

The protein localises to the cytoplasm. It catalyses the reaction L-aspartate 4-semialdehyde + pyruvate = (2S,4S)-4-hydroxy-2,3,4,5-tetrahydrodipicolinate + H2O + H(+). It functions in the pathway amino-acid biosynthesis; L-lysine biosynthesis via DAP pathway; (S)-tetrahydrodipicolinate from L-aspartate: step 3/4. Its function is as follows. Catalyzes the condensation of (S)-aspartate-beta-semialdehyde [(S)-ASA] and pyruvate to 4-hydroxy-tetrahydrodipicolinate (HTPA). This is 4-hydroxy-tetrahydrodipicolinate synthase from Alcanivorax borkumensis (strain ATCC 700651 / DSM 11573 / NCIMB 13689 / SK2).